The following is a 322-amino-acid chain: Putative T-box protein 11 (322 aa).

Residues 16 to 185 (LWRSCHEYDN…NNPYSTGSRK (170 aa)) constitute a DNA-binding region (T-box). A compositionally biased stretch (polar residues) spans 171–182 (TLKTNNNPYSTG). Residues 171–214 (TLKTNNNPYSTGSRKDRRRERQSPVYSEGTSSEKSISPPPAKKI) are disordered.

The protein resides in the nucleus. The protein is Putative T-box protein 11 (tbx-11) of Caenorhabditis elegans.